A 510-amino-acid polypeptide reads, in one-letter code: NAD(P)H-quinone oxidoreductase subunit 2, chloroplastic (510 aa).

A run of 12 helical transmembrane segments spans residues 24-44 (LLLFHGSFIFPECILIFGLIL), 59-79 (WFYFISSTSLIISITALLFRW), 99-119 (IFQFLILLCSTLCIPLSVEYI), 124-144 (MAITEFLLFVLTATLGGMFLC), 149-169 (LITIFVAPECFSLCSYLLSGY), 183-203 (YLLMGGASSSILVHGFSWLYG), 229-249 (ISIALISITVGIGFKLSPAPF), 295-315 (WHLLLEILAILSMILGNLIAI), 323-343 (MLAYSSIGQIGYVIIGIIVGD), 354-374 (YMLFYISMNLGTFACIVLFGL), 395-415 (ALSSALCLLSLGGLPPLAGFF), and 418-438 (LHLFWCGWQAGLYFLVSIGLL).

The protein belongs to the complex I subunit 2 family. NDH is composed of at least 16 different subunits, 5 of which are encoded in the nucleus.

It is found in the plastid. The protein resides in the chloroplast thylakoid membrane. The enzyme catalyses a plastoquinone + NADH + (n+1) H(+)(in) = a plastoquinol + NAD(+) + n H(+)(out). It carries out the reaction a plastoquinone + NADPH + (n+1) H(+)(in) = a plastoquinol + NADP(+) + n H(+)(out). NDH shuttles electrons from NAD(P)H:plastoquinone, via FMN and iron-sulfur (Fe-S) centers, to quinones in the photosynthetic chain and possibly in a chloroplast respiratory chain. The immediate electron acceptor for the enzyme in this species is believed to be plastoquinone. Couples the redox reaction to proton translocation, and thus conserves the redox energy in a proton gradient. The sequence is that of NAD(P)H-quinone oxidoreductase subunit 2, chloroplastic from Ensete ventricosum (Abyssinian banana).